A 182-amino-acid polypeptide reads, in one-letter code: Probable nicotinate-nucleotide adenylyltransferase (182 aa).

It belongs to the NadD family.

It catalyses the reaction nicotinate beta-D-ribonucleotide + ATP + H(+) = deamido-NAD(+) + diphosphate. The protein operates within cofactor biosynthesis; NAD(+) biosynthesis; deamido-NAD(+) from nicotinate D-ribonucleotide: step 1/1. Its function is as follows. Catalyzes the reversible adenylation of nicotinate mononucleotide (NaMN) to nicotinic acid adenine dinucleotide (NaAD). This Aliarcobacter butzleri (strain RM4018) (Arcobacter butzleri) protein is Probable nicotinate-nucleotide adenylyltransferase.